We begin with the raw amino-acid sequence, 147 residues long: Mineralocorticoid receptor (147 aa).

The NR LBD domain maps to 1–147 (FALSWRSYKH…SQALKVEFPA (147 aa)). 21-hydroxyprogesterone contacts are provided by Arg6 and Thr134. 2 residues coordinate aldosterone: Arg6 and Thr134. 2 residues coordinate progesterone: Arg6 and Thr134.

Belongs to the nuclear hormone receptor family. NR3 subfamily.

The protein resides in the cytoplasm. It is found in the nucleus. Receptor for both mineralocorticoids (MC) such as aldosterone and glucocorticoids (GC) such as corticosterone or cortisol. Binds to mineralocorticoid response elements (MRE) and transactivates target genes. The effect of MC is to increase ion and water transport and thus raise extracellular fluid volume and blood pressure and lower potassium levels. The sequence is that of Mineralocorticoid receptor (NR3C2) from Gallus gallus (Chicken).